A 906-amino-acid polypeptide reads, in one-letter code: Protein translocase subunit SecA (906 aa).

Residues Gln87, 105–109 (GEGKT), and Asp507 contribute to the ATP site. Zn(2+)-binding residues include Cys890, Cys892, Cys901, and His902.

The protein belongs to the SecA family. As to quaternary structure, monomer and homodimer. Part of the essential Sec protein translocation apparatus which comprises SecA, SecYEG and auxiliary proteins SecDF-YajC and YidC. It depends on Zn(2+) as a cofactor.

The protein localises to the cell inner membrane. Its subcellular location is the cytoplasm. It carries out the reaction ATP + H2O + cellular proteinSide 1 = ADP + phosphate + cellular proteinSide 2.. In terms of biological role, part of the Sec protein translocase complex. Interacts with the SecYEG preprotein conducting channel. Has a central role in coupling the hydrolysis of ATP to the transfer of proteins into and across the cell membrane, serving both as a receptor for the preprotein-SecB complex and as an ATP-driven molecular motor driving the stepwise translocation of polypeptide chains across the membrane. The polypeptide is Protein translocase subunit SecA (Laribacter hongkongensis (strain HLHK9)).